Consider the following 202-residue polypeptide: Holliday junction branch migration complex subunit RuvA (202 aa).

The domain I stretch occupies residues 1–63 (MIAFLSGRVV…EDSLTLFGFA (63 aa)). Positions 64 to 142 (DDDERDTFER…EPGGDTAATP (79 aa)) are domain II. Residues 143 to 152 (EQSAAAAPRN) form a flexible linker region. A domain III region spans residues 152 to 202 (NWRAQVVSGLVNLGWSTREAEAAADAVAAEAGEQPDVAALLRSALRRLSRA).

Belongs to the RuvA family. As to quaternary structure, homotetramer. Forms an RuvA(8)-RuvB(12)-Holliday junction (HJ) complex. HJ DNA is sandwiched between 2 RuvA tetramers; dsDNA enters through RuvA and exits via RuvB. An RuvB hexamer assembles on each DNA strand where it exits the tetramer. Each RuvB hexamer is contacted by two RuvA subunits (via domain III) on 2 adjacent RuvB subunits; this complex drives branch migration. In the full resolvosome a probable DNA-RuvA(4)-RuvB(12)-RuvC(2) complex forms which resolves the HJ.

The protein localises to the cytoplasm. In terms of biological role, the RuvA-RuvB-RuvC complex processes Holliday junction (HJ) DNA during genetic recombination and DNA repair, while the RuvA-RuvB complex plays an important role in the rescue of blocked DNA replication forks via replication fork reversal (RFR). RuvA specifically binds to HJ cruciform DNA, conferring on it an open structure. The RuvB hexamer acts as an ATP-dependent pump, pulling dsDNA into and through the RuvAB complex. HJ branch migration allows RuvC to scan DNA until it finds its consensus sequence, where it cleaves and resolves the cruciform DNA. This is Holliday junction branch migration complex subunit RuvA from Thermobifida fusca (strain YX).